The following is a 343-amino-acid chain: Palmitoyltransferase ZDHHC4 (343 aa).

Topologically, residues 1-2 (MD) are lumenal. Residues 3–23 (FLVLFSFYLAFLLICVIMICI) traverse the membrane as a helical segment. Residues 24-67 (FTKSQRLKAVVLGGAQVCARVTPQCFQRAVQTLLHQLFHTRHPA) lie on the Cytoplasmic side of the membrane. Residues 68 to 88 (FLALHLLLQGLVYAEYTYEVF) form a helical membrane-spanning segment. The Lumenal segment spans residues 89-95 (SYCRELE). The chain crosses the membrane as a helical span at residues 96 to 116 (FSLPCLLLPYVLLSVNLVFFT). Residues 117-193 (LTCSTNPGTI…NCIGAWNTGY (77 aa)) lie on the Cytoplasmic side of the membrane. The DHHC domain maps to 149-199 (SRCSTCDLRKPARSKHCRVCDRCVHRFDHHCVWVNNCIGAWNTGYFLIYLL). The S-palmitoyl cysteine intermediate role is filled by Cys179. A helical membrane pass occupies residues 194–214 (FLIYLLTLTASAATIAILSAA). The Lumenal portion of the chain corresponds to 215–255 (FLLRLVAVSNLYQETYLDDLGRFQAVDTGFLIQHLFLAFPR). A helical transmembrane segment spans residues 256–276 (IIFLLGFVIVLSLLLAGYLCF). The Cytoplasmic portion of the chain corresponds to 277-343 (ALYLAATNQT…ATPSYKKKKR (67 aa)). The Di-lysine motif signature appears at 340–343 (KKKR).

The protein belongs to the DHHC palmitoyltransferase family. As to quaternary structure, interacts with CPT1A.

Its subcellular location is the endoplasmic reticulum membrane. It is found in the golgi apparatus membrane. The protein resides in the cell membrane. The catalysed reaction is L-cysteinyl-[protein] + hexadecanoyl-CoA = S-hexadecanoyl-L-cysteinyl-[protein] + CoA. Its function is as follows. Palmitoyltransferase that could catalyze the addition of palmitate onto protein substrates including the D(2) dopamine receptor DRD2, GSK3B or MAVS. Mediates GSK3B palmitoylation to prevent its AKT1-mediated phosphorylation leading to activation of the STAT3 signaling pathway. Also catalyzes MAVS palmitoylation which promotes its stabilization and activation by inhibiting 'Lys-48'- but facilitating 'Lys-63'-linked ubiquitination. The polypeptide is Palmitoyltransferase ZDHHC4 (Rattus norvegicus (Rat)).